We begin with the raw amino-acid sequence, 385 residues long: Multidrug resistance protein MdtE (385 aa).

A signal peptide spans 1–20 (MNRRRKLLIPLLFCGAMLTA). Cys21 carries the N-palmitoyl cysteine lipid modification. Cys21 is lipidated: S-diacylglycerol cysteine.

The protein belongs to the membrane fusion protein (MFP) (TC 8.A.1) family. In terms of assembly, homotrimer. Part of the tripartite efflux system MdtEF-TolC, which is composed of an inner membrane transporter, MdtF, a membrane fusion protein, MdtE, and an outer membrane component, TolC. The complex forms a large protein conduit and can translocate molecules across both the inner and outer membranes.

It is found in the cell inner membrane. Part of the tripartite efflux system MdtEF-TolC, which confers resistance to compounds such as rhodamine 6G, erythromycin, doxorubicin, ethidium bromide, TPP, SDS, deoxycholate, crystal violet and benzalkonium. In Escherichia coli (strain K12), this protein is Multidrug resistance protein MdtE (mdtE).